The following is a 439-amino-acid chain: MSEYKYLSGFGSHFSSEDERYPNSLPVGQNSPQVCPYKLYAEQLSGSAFTAPRTENMRTWLYRKLPSAAHLPFQPFKGAEYFSQNWDEQPPNPNQLRWKPFDLPPKDGKNVNFVEGLHTVCGAGDPRSRHGLAIHIYSCNGSMDNSAFYNSDGDFLIVPQQGVLDITTEFGRMSVAPNEICVIPQGIRFAVNVDSPSRGYILEVYDDHFVLPDLGPIGANGLANPRDFETPVAWFDDRDVKDFQVISKFQGRLFVAKQNHTVFDVVAWHGNYVPFKYDLSKFMVINSVSFDHCDPSIFTVLTCPSLRAGTAIADFVIFPPRWSVQEHTFRPPYYHRNCMSEFMGLILGKYEAKEDGFAAGGATLHSMMTPHGPDVKCFEGASNAKLVPERVAEGTQAFMFESSLSLAVTKWGEETCQKLDAAYYECWQALKNNFQITKN.

Residues His-335, Glu-341, and His-371 each contribute to the Fe cation site.

Belongs to the homogentisate dioxygenase family. Fe cation serves as cofactor.

It carries out the reaction homogentisate + O2 = 4-maleylacetoacetate + H(+). It participates in amino-acid degradation; L-phenylalanine degradation; acetoacetate and fumarate from L-phenylalanine: step 4/6. This Drosophila melanogaster (Fruit fly) protein is Homogentisate 1,2-dioxygenase.